The sequence spans 1063 residues: Unconventional myosin-Ic (1063 aa).

Met1 bears the N-acetylmethionine mark. Residues 47–731 (GVQDFVLLEN…TLFATEDALE (685 aa)) form the Myosin motor domain. Residues Asn88, Tyr96, 139–148 (SGESGAGKTE), and 192–196 (NDNSS) contribute to the ATP site. The residue at position 383 (Lys383) is an N6-methyllysine. Ser408 carries the phosphoserine modification. An N6-acetyllysine modification is found at Lys486. Ser536 carries the phosphoserine modification. Residues 608–630 (LLELVEILKSKEPAYVRCIKPND) are actin-binding. 2 consecutive IQ domains span residues 734–757 (RQSLATKIQATWRGFHCRQKFLRV) and 758–786 (KRSAICIQSWWRGTLGRRKAAKRKWAAQT). A phosphoserine mark is found at Ser864 and Ser1041. The 175-residue stretch at 885–1059 (KDNYPQSVPR…NGHLAVVAPR (175 aa)) folds into the TH1 domain.

It belongs to the TRAFAC class myosin-kinesin ATPase superfamily. Myosin family. As to quaternary structure, interacts (via its IQ motifs) with CABP1 and CIB1; the interaction with CABP1 and CIB1 is calcium-dependent. Interacts (via tail domain) with PLEKHB1 (via PH domain); the interaction is not affected by the presence or absence of calcium and CALM. Interacts with POLR1A. Interacts with POLR2A. Component of the B-WICH complex, at least composed of SMARCA5/SNF2H, BAZ1B/WSTF, SF3B1, DEK, MYO1C, ERCC6, MYBBP1A and DDX21. Interacts (via its IQ motifs) with CALM; this precludes interaction with YWHAB. Interacts with YWHAB; this precludes interaction with CALM. Interacts with RPS6. Interacts with actin. Interacts with LLPH. Interacts with GLUT4. Interacts (via its IQ motifs) with SH3BGRL3; the interaction is dependent on calcium and takes place at membrane ruffles. In terms of processing, isoform 2 contains a N-acetylmethionine at position 1. Widely expressed.

The protein resides in the cytoplasm. It is found in the nucleus. It localises to the cell cortex. The protein localises to the cell projection. Its subcellular location is the ruffle membrane. The protein resides in the cytoplasmic vesicle. It is found in the stereocilium membrane. It localises to the nucleolus. The protein localises to the nucleoplasm. Myosins are actin-based motor molecules with ATPase activity. Unconventional myosins serve in intracellular movements. Their highly divergent tails are presumed to bind to membranous compartments, which would be moved relative to actin filaments. Involved in glucose transporter recycling in response to insulin by regulating movement of intracellular GLUT4-containing vesicles to the plasma membrane. Component of the hair cell's (the sensory cells of the inner ear) adaptation-motor complex. Acts as a mediator of adaptation of mechanoelectrical transduction in stereocilia of vestibular hair cells. Binds phosphoinositides and links the actin cytoskeleton to cellular membranes. In terms of biological role, isoform 3 is involved in regulation of transcription. Associated with transcriptional active ribosomal genes. Appears to cooperate with the WICH chromatin-remodeling complex to facilitate transcription. Necessary for the formation of the first phosphodiester bond during transcription initiation. The polypeptide is Unconventional myosin-Ic (MYO1C) (Bos taurus (Bovine)).